The chain runs to 331 residues: GTP 3',8-cyclase (331 aa).

Residues 9-233 (SFGRQVTYVR…TATNEHTGGP (225 aa)) enclose the Radical SAM core domain. Residue R18 participates in GTP binding. C25 and C29 together coordinate [4Fe-4S] cluster. Y31 serves as a coordination point for S-adenosyl-L-methionine. A [4Fe-4S] cluster-binding site is contributed by C32. R67 is a GTP binding site. Residue G71 participates in S-adenosyl-L-methionine binding. Residue T98 participates in GTP binding. S122 serves as a coordination point for S-adenosyl-L-methionine. K159 serves as a coordination point for GTP. Residue M193 coordinates S-adenosyl-L-methionine. [4Fe-4S] cluster-binding residues include C257 and C260. A GTP-binding site is contributed by 262–264 (RVR). Residue C274 participates in [4Fe-4S] cluster binding.

It belongs to the radical SAM superfamily. MoaA family. Monomer and homodimer. The cofactor is [4Fe-4S] cluster.

The enzyme catalyses GTP + AH2 + S-adenosyl-L-methionine = (8S)-3',8-cyclo-7,8-dihydroguanosine 5'-triphosphate + 5'-deoxyadenosine + L-methionine + A + H(+). It participates in cofactor biosynthesis; molybdopterin biosynthesis. Functionally, catalyzes the cyclization of GTP to (8S)-3',8-cyclo-7,8-dihydroguanosine 5'-triphosphate. This Saccharophagus degradans (strain 2-40 / ATCC 43961 / DSM 17024) protein is GTP 3',8-cyclase.